The following is a 483-amino-acid chain: Zinc metalloproteinase/disintegrin (483 aa).

The N-terminal stretch at 1 to 20 (MIQVLLVTICLAVFPYQGSS) is a signal peptide. A propeptide spanning residues 21–190 (IILESGNVND…KASQLYLTPE (170 aa)) is cleaved from the precursor. A Peptidase M12B domain is found at 197-395 (RYIELAIVVD…RNPQCILNAP (199 aa)). Residue E200 participates in Ca(2+) binding. N-linked (GlcNAc...) asparagine glycosylation occurs at N263. D284 serves as a coordination point for Ca(2+). Residue N293 is glycosylated (N-linked (GlcNAc...) asparagine). 3 cysteine pairs are disulfide-bonded: C308–C390, C352–C374, and C354–C357. H333 contributes to the Zn(2+) binding site. Residue E334 is part of the active site. Zn(2+)-binding residues include H337 and H343. The Ca(2+) site is built by C390 and N393. A propeptide spanning residues 396-413 (LRTDTVSTPVSGNEFLEA) is cleaved from the precursor. One can recognise a Disintegrin domain in the interval 403–483 (TPVSGNEFLE…SNDCPRWNDL (81 aa)). Cystine bridges form between C417-C432, C419-C427, C426-C449, C440-C446, C445-C470, and C458-C477. Residues 462-464 (RGD) carry the Cell attachment site motif.

The protein belongs to the venom metalloproteinase (M12B) family. P-II subfamily. P-IIa sub-subfamily. As to quaternary structure, monomeric (disintegrin). Requires Zn(2+) as cofactor. In terms of tissue distribution, expressed by the venom gland.

The protein resides in the secreted. In terms of biological role, impairs hemostasis in the envenomed animal. Functionally, inhibits platelet aggregation induced by ADP, thrombin, platelet-activating factor and collagen. Acts by inhibiting fibrinogen interaction with platelet receptors GPIIb/GPIIIa (ITGA2B/ITGB3). This is Zinc metalloproteinase/disintegrin from Protobothrops flavoviridis (Habu).